The primary structure comprises 147 residues: Transthyretin (147 aa).

Residues 1 to 20 (MASHRLLLLCLAGLVFVSEA) form the signal peptide. A Sulfocysteine modification is found at C30. K35 contacts L-thyroxine. The residue at position 72 (S72) is a Phosphoserine. An L-thyroxine-binding site is contributed by E74. N-linked (GlcNAc...) asparagine glycosylation is present at N118. S137 provides a ligand contact to L-thyroxine.

This sequence belongs to the transthyretin family. In terms of assembly, homotetramer. Dimer of dimers. In the homotetramer, subunits assemble around a central channel that can accommodate two ligand molecules. Interacts with RBP4. In terms of processing, sulfonation of the reactive cysteine Cys-30 enhances the stability of the native conformation of TTR, avoiding misassembly of the protein leading to amyloid formation.

The protein localises to the secreted. Thyroid hormone-binding protein. Probably transports thyroxine from the bloodstream to the brain. In Macaca fascicularis (Crab-eating macaque), this protein is Transthyretin (TTR).